A 435-amino-acid chain; its full sequence is ATP-dependent protease ATPase subunit HslU (435 aa).

Residues isoleucine 18, 60–65, aspartate 248, glutamate 313, and arginine 385 each bind ATP; that span reads GVGKTE.

Belongs to the ClpX chaperone family. HslU subfamily. A double ring-shaped homohexamer of HslV is capped on each side by a ring-shaped HslU homohexamer. The assembly of the HslU/HslV complex is dependent on binding of ATP.

The protein resides in the cytoplasm. In terms of biological role, ATPase subunit of a proteasome-like degradation complex; this subunit has chaperone activity. The binding of ATP and its subsequent hydrolysis by HslU are essential for unfolding of protein substrates subsequently hydrolyzed by HslV. HslU recognizes the N-terminal part of its protein substrates and unfolds these before they are guided to HslV for hydrolysis. The chain is ATP-dependent protease ATPase subunit HslU from Rhizobium johnstonii (strain DSM 114642 / LMG 32736 / 3841) (Rhizobium leguminosarum bv. viciae).